Consider the following 246-residue polypeptide: UDP-N-acetyl-D-mannosaminuronic acid transferase (246 aa).

The protein belongs to the glycosyltransferase 26 family.

It carries out the reaction UDP-N-acetyl-alpha-D-mannosaminouronate + N-acetyl-alpha-D-glucosaminyl-di-trans,octa-cis-undecaprenyl diphosphate = beta-D-ManNAcA-(1-&gt;4)-alpha-D-GlcNAc-di-trans,octa-cis-undecaprenyl diphosphate + UDP + H(+). It participates in bacterial outer membrane biogenesis; enterobacterial common antigen biosynthesis. In terms of biological role, catalyzes the synthesis of Und-PP-GlcNAc-ManNAcA (Lipid II), the second lipid-linked intermediate involved in enterobacterial common antigen (ECA) synthesis. The protein is UDP-N-acetyl-D-mannosaminuronic acid transferase of Salmonella arizonae (strain ATCC BAA-731 / CDC346-86 / RSK2980).